Consider the following 535-residue polypeptide: Ribonuclease Y (535 aa).

A helical membrane pass occupies residues 30 to 50 (IWALPALVIGLAIGAGIGILI). The region spanning 225 to 285 (TVSTVALPSE…VRREVARLAL (61 aa)) is the KH domain. Positions 351–444 (VLQHSLECAL…VQAVDAISGG (94 aa)) constitute an HD domain.

The protein belongs to the RNase Y family.

The protein resides in the cell membrane. In terms of biological role, endoribonuclease that initiates mRNA decay. In Roseiflexus sp. (strain RS-1), this protein is Ribonuclease Y.